The primary structure comprises 354 residues: Carbamoyl phosphate synthase arginine-specific small chain (354 aa).

The CPSase stretch occupies residues 1–163 (MKAYLHVASG…RTIETYGEGG (163 aa)). L-glutamine contacts are provided by serine 46, glycine 213, and glycine 215. In terms of domain architecture, Glutamine amidotransferase type-1 spans 165-352 (HLVLVDFGYK…LQTVFKGENV (188 aa)). Cysteine 240 functions as the Nucleophile in the catalytic mechanism. Residues leucine 241, glutamine 244, asparagine 282, and tyrosine 285 each contribute to the L-glutamine site. Active-site residues include histidine 325 and glutamate 327.

This sequence belongs to the CarA family. In terms of assembly, composed of two chains; the small (or glutamine) chain promotes the hydrolysis of glutamine to ammonia, which is used by the large (or ammonia) chain to synthesize carbamoyl phosphate. Tetramer of heterodimers (alpha,beta)4.

It catalyses the reaction hydrogencarbonate + L-glutamine + 2 ATP + H2O = carbamoyl phosphate + L-glutamate + 2 ADP + phosphate + 2 H(+). The enzyme catalyses L-glutamine + H2O = L-glutamate + NH4(+). The protein operates within amino-acid biosynthesis; L-arginine biosynthesis; carbamoyl phosphate from bicarbonate: step 1/1. Functionally, small subunit of the glutamine-dependent carbamoyl phosphate synthetase (CPSase). CPSase catalyzes the formation of carbamoyl phosphate from the ammonia moiety of glutamine, carbonate, and phosphate donated by ATP, constituting the first step of the biosynthetic pathway leading to arginine and/or urea. The small subunit (glutamine amidotransferase) binds and cleaves glutamine to supply the large subunit with the substrate ammonia. In Geobacillus stearothermophilus (Bacillus stearothermophilus), this protein is Carbamoyl phosphate synthase arginine-specific small chain.